The chain runs to 78 residues: Probable Fe(2+)-trafficking protein (78 aa).

This sequence belongs to the Fe(2+)-trafficking protein family. In terms of assembly, monomer.

Could be a mediator in iron transactions between iron acquisition and iron-requiring processes, such as synthesis and/or repair of Fe-S clusters in biosynthetic enzymes. The chain is Probable Fe(2+)-trafficking protein from Wigglesworthia glossinidia brevipalpis.